Here is a 621-residue protein sequence, read N- to C-terminus: tRNA uridine 5-carboxymethylaminomethyl modification enzyme MnmG (621 aa).

FAD is bound at residue 11–16 (GGGHAG). Residue 270–284 (GPRYCPSIEDKINRF) coordinates NAD(+).

It belongs to the MnmG family. In terms of assembly, homodimer. Heterotetramer of two MnmE and two MnmG subunits. FAD is required as a cofactor.

It is found in the cytoplasm. NAD-binding protein involved in the addition of a carboxymethylaminomethyl (cmnm) group at the wobble position (U34) of certain tRNAs, forming tRNA-cmnm(5)s(2)U34. The sequence is that of tRNA uridine 5-carboxymethylaminomethyl modification enzyme MnmG from Helicobacter pylori (strain Shi470).